Reading from the N-terminus, the 118-residue chain is Large ribosomal subunit protein uL22 (118 aa).

Belongs to the universal ribosomal protein uL22 family. As to quaternary structure, part of the 50S ribosomal subunit.

This protein binds specifically to 23S rRNA; its binding is stimulated by other ribosomal proteins, e.g. L4, L17, and L20. It is important during the early stages of 50S assembly. It makes multiple contacts with different domains of the 23S rRNA in the assembled 50S subunit and ribosome. Its function is as follows. The globular domain of the protein is located near the polypeptide exit tunnel on the outside of the subunit, while an extended beta-hairpin is found that lines the wall of the exit tunnel in the center of the 70S ribosome. In Treponema denticola (strain ATCC 35405 / DSM 14222 / CIP 103919 / JCM 8153 / KCTC 15104), this protein is Large ribosomal subunit protein uL22.